A 475-amino-acid chain; its full sequence is Ribulose bisphosphate carboxylase large chain (475 aa).

Residues 1–2 (MS) constitute a propeptide that is removed on maturation. Pro3 carries the N-acetylproline modification. Lys14 carries the post-translational modification N6,N6,N6-trimethyllysine. The substrate site is built by Asn123 and Thr173. Catalysis depends on Lys175, which acts as the Proton acceptor. Lys177 contacts substrate. Mg(2+) contacts are provided by Lys201, Asp203, and Glu204. Lys201 is modified (N6-carboxylysine). His294 (proton acceptor) is an active-site residue. The substrate site is built by Arg295, His327, and Ser379.

Belongs to the RuBisCO large chain family. Type I subfamily. As to quaternary structure, heterohexadecamer of 8 large chains and 8 small chains; disulfide-linked. The disulfide link is formed within the large subunit homodimers. Mg(2+) is required as a cofactor. In terms of processing, the disulfide bond which can form in the large chain dimeric partners within the hexadecamer appears to be associated with oxidative stress and protein turnover.

It localises to the plastid. The protein localises to the chloroplast. It carries out the reaction 2 (2R)-3-phosphoglycerate + 2 H(+) = D-ribulose 1,5-bisphosphate + CO2 + H2O. It catalyses the reaction D-ribulose 1,5-bisphosphate + O2 = 2-phosphoglycolate + (2R)-3-phosphoglycerate + 2 H(+). In terms of biological role, ruBisCO catalyzes two reactions: the carboxylation of D-ribulose 1,5-bisphosphate, the primary event in carbon dioxide fixation, as well as the oxidative fragmentation of the pentose substrate in the photorespiration process. Both reactions occur simultaneously and in competition at the same active site. This chain is Ribulose bisphosphate carboxylase large chain, found in Alnus incana (White alder).